A 295-amino-acid polypeptide reads, in one-letter code: Craniofacial development protein 1 (295 aa).

Composition is skewed to acidic residues over residues methionine 1–tyrosine 18 and tyrosine 25–glutamate 43. 2 disordered regions span residues methionine 1 to glutamate 155 and phenylalanine 188 to glycine 219. Residues lysine 49–glutamine 65 are compositionally biased toward basic residues. Residues leucine 70–glutamate 93 are compositionally biased toward acidic residues. Phosphoserine occurs at positions 80, 83, 84, and 112. Over residues lysine 120–lysine 130 the composition is skewed to low complexity. Composition is skewed to basic and acidic residues over residues valine 145–glutamate 155 and phenylalanine 188–proline 197. A Glycyl lysine isopeptide (Lys-Gly) (interchain with G-Cter in SUMO2) cross-link involves residue lysine 146. A hydrophilic region spans residues valine 174–glycine 213. Serine 212 is modified (phosphoserine). A BCNT-C domain is found at isoleucine 214 to proline 295. Lysine 215 is modified (N6-methyllysine). A Phosphoserine modification is found at serine 246.

Its subcellular location is the chromosome. It localises to the centromere. It is found in the kinetochore. Functionally, may play a role during embryogenesis. This is Craniofacial development protein 1 (Cfdp1) from Rattus norvegicus (Rat).